A 610-amino-acid polypeptide reads, in one-letter code: Tyrosine-protein kinase Drl (610 aa).

An N-terminal signal peptide occupies residues 1 to 20 (MAPNLLTIGLLLTLIASGQA). Residues 21-242 (HLNIFLNLHE…RENLVPPASG (222 aa)) lie on the Extracellular side of the membrane. A WIF domain is found at 24 to 155 (IFLNLHEVLR…NLIFKRKKIC (132 aa)). Residues Asn63, Asn99, and Asn143 are each glycosylated (N-linked (GlcNAc...) asparagine). Residues 202 to 230 (QAPEKQRPVVTESPVGRGNSGGSKRDFDP) are disordered. The chain crosses the membrane as a helical span at residues 243–263 (LVTLIVGGILALVLVSTLILI). Topologically, residues 264 to 610 (AYCAKGPSKR…EFHTQITRYV (347 aa)) are cytoplasmic. One can recognise a Protein kinase domain in the interval 343 to 606 (VRLSCLVQEG…ICLSEFHTQI (264 aa)). ATP contacts are provided by residues 349 to 357 (VQEGNFGRI) and Lys371. The active-site Proton acceptor is Asp468. At Tyr498 the chain carries Phosphotyrosine; by autocatalysis.

Belongs to the protein kinase superfamily. Tyr protein kinase family. In terms of tissue distribution, in the embryonic abdominal hemisegment, expression is restricted to cell body, axon and growth cone of a cluster of 20 ventral nerve cord interneurons. During muscle growth and attachment events in the embryonic abdominal hemisegment, expression is in somatic muscle fibers 21-23 at 10-13 hours and 2 patches of approximately 15 neighboring epidermal cells (dorsal and ventral attachment sites) at 6-13 hours.

It localises to the cell membrane. It carries out the reaction L-tyrosyl-[protein] + ATP = O-phospho-L-tyrosyl-[protein] + ADP + H(+). Probable coreceptor of Wnt proteins. Involved in neuronal pathway recognition and ventral muscle attachment site selection. Non-vital for development. May be part of a signal transduction cascade involved in learning and possibly memory. This Drosophila melanogaster (Fruit fly) protein is Tyrosine-protein kinase Drl (drl).